We begin with the raw amino-acid sequence, 878 residues long: Interleukin-3 receptor class 2 subunit beta (878 aa).

The N-terminal stretch at 1-22 (MDQQMALTWGLCYMALVALCWG) is a signal peptide. At 23 to 440 (HEVTEEEETV…SNEYTWTTDW (418 aa)) the chain is on the extracellular side. An intrachain disulfide couples Cys39 to Cys49. A glycan (N-linked (GlcNAc...) asparagine) is linked at Asn62. Cys78 and Cys95 are oxidised to a cystine. Residues 139–244 (PPKDIHISPS…PEVHWDSQPG (106 aa)) enclose the Fibronectin type-III 1 domain. The disordered stretch occupies residues 223 to 244 (GSSLSGRPSRWSPEVHWDSQPG). 2 disulfide bridges follow: Cys254–Cys264 and Cys293–Cys310. The Fibronectin type-III 2 domain maps to 343–438 (QMEPPILNQT…EWSNEYTWTT (96 aa)). N-linked (GlcNAc...) asparagine glycosylation is present at Asn350. Positions 427-431 (WSEWS) match the WSXWS motif motif. Residues 441–462 (VMPTLWIVLILVFLIFTLLLAL) traverse the membrane as a helical segment. The Cytoplasmic segment spans residues 463 to 878 (HFGRVYGYRT…AIQFFKSLKY (416 aa)). The Box 1 motif signature appears at 476–484 (WKEKIPNPS). Disordered regions lie at residues 539-620 (LTIE…GGSL) and 660-709 (SSLE…MASD). Positions 554–570 (PDTTPAASSESTEQLPN) are enriched in polar residues. Positions 671-689 (EPKENPPVELSVEKQEARD) are enriched in basic and acidic residues. Ser752 and Ser754 each carry phosphoserine. Residue Tyr765 is modified to Phosphotyrosine. 2 disordered regions span residues 771-810 (SVSQ…PHPE) and 829-849 (PGSL…ETED).

It belongs to the type I cytokine receptor family. Type 4 subfamily. Heterodimer of an alpha and a beta subunit.

The protein localises to the membrane. Functionally, in mouse, there are two classes of high-affinity IL3 receptors. One contains this IL3-specific beta subunit and the other contains the beta subunit also shared by high-affinity IL5 and GM-CSF receptors. This chain is Interleukin-3 receptor class 2 subunit beta (Csf2rb2), found in Mus musculus (Mouse).